The sequence spans 446 residues: Glutamyl-tRNA reductase (446 aa).

Residues 49–52, Ser-109, 114–116, and Gln-120 each bind substrate; these read TCNR and ETQ. Cys-50 serves as the catalytic Nucleophile. Position 189–194 (189–194) interacts with NADP(+); sequence GAGETG.

The protein belongs to the glutamyl-tRNA reductase family. As to quaternary structure, homodimer.

It catalyses the reaction (S)-4-amino-5-oxopentanoate + tRNA(Glu) + NADP(+) = L-glutamyl-tRNA(Glu) + NADPH + H(+). It functions in the pathway porphyrin-containing compound metabolism; protoporphyrin-IX biosynthesis; 5-aminolevulinate from L-glutamyl-tRNA(Glu): step 1/2. Catalyzes the NADPH-dependent reduction of glutamyl-tRNA(Glu) to glutamate 1-semialdehyde (GSA). The sequence is that of Glutamyl-tRNA reductase from Exiguobacterium sibiricum (strain DSM 17290 / CCUG 55495 / CIP 109462 / JCM 13490 / 255-15).